Consider the following 40-residue polypeptide: Photosystem II reaction center protein J (40 aa).

A helical transmembrane segment spans residues 8–28 (IPLWLIGTVTGIIVIGLLGVF).

This sequence belongs to the PsbJ family. As to quaternary structure, PSII is composed of 1 copy each of membrane proteins PsbA, PsbB, PsbC, PsbD, PsbE, PsbF, PsbH, PsbI, PsbJ, PsbK, PsbL, PsbM, PsbT, PsbX, PsbY, PsbZ, Psb30/Ycf12, at least 3 peripheral proteins of the oxygen-evolving complex and a large number of cofactors. It forms dimeric complexes.

It is found in the plastid. The protein localises to the chloroplast thylakoid membrane. One of the components of the core complex of photosystem II (PSII). PSII is a light-driven water:plastoquinone oxidoreductase that uses light energy to abstract electrons from H(2)O, generating O(2) and a proton gradient subsequently used for ATP formation. It consists of a core antenna complex that captures photons, and an electron transfer chain that converts photonic excitation into a charge separation. The protein is Photosystem II reaction center protein J of Pinus thunbergii (Japanese black pine).